A 75-amino-acid chain; its full sequence is Ferredoxin-thioredoxin reductase, variable chain (75 aa).

The tract at residues 43 to 46 is interaction with ferredoxin; sequence QGRP.

This sequence belongs to the ferredoxin thioredoxin reductase alpha subunit family. As to quaternary structure, heterodimer of subunit A (variable subunit) and subunit B (catalytic subunit). Heterodimeric FTR forms a complex with ferredoxin and thioredoxin.

Functionally, variable subunit of the ferredoxin-thioredoxin reductase (FTR), which catalyzes the two-electron reduction of thioredoxins by the electrons provided by reduced ferredoxin. This chain is Ferredoxin-thioredoxin reductase, variable chain (ftrV), found in Synechocystis sp. (strain ATCC 27184 / PCC 6803 / Kazusa).